A 499-amino-acid chain; its full sequence is Nucleoside transporter 2 (499 aa).

At 1–30 (MTGQSAAVEGSNSALPWYRMGFHTLAEFNT) the chain is on the cytoplasmic side. Transmembrane regions (helical) follow at residues 31–51 (YVTF…VTSA), 112–132 (LFLG…VPAA), 133–153 (TIPT…MGGL), 179–199 (WGLT…QVSM), and 212–232 (IYFG…VLLR). Residues 255-267 (VEPEESQDSKEPA) are compositionally biased toward basic and acidic residues. The disordered stretch occupies residues 255 to 276 (VEPEESQDSKEPATGDVAEAPK). Residue asparagine 326 is glycosylated (N-linked (GlcNAc...) asparagine). 5 helical membrane passes run 350–370 (LCAF…FFLV), 378–398 (MTII…LLMI), 406–426 (KLVI…VLCV), 428–448 (GFIP…LTNG), and 475–495 (MLAG…SLAI).

It belongs to the SLC29A/ENT transporter (TC 2.A.57) family.

The protein localises to the cell membrane. It localises to the cell projection. Its subcellular location is the cilium. It is found in the flagellum. It carries out the reaction inosine(in) + H(+)(in) = inosine(out) + H(+)(out). The catalysed reaction is guanosine(in) + H(+)(in) = guanosine(out) + H(+)(out). It catalyses the reaction xanthosine(in) + H(+)(in) = xanthosine(out) + H(+)(out). High affinity nucleoside:H(+) symporter; transports inosine and guanosine. Can transport xanthosine. This Leishmania donovani protein is Nucleoside transporter 2.